Reading from the N-terminus, the 439-residue chain is Xaa-Pro dipeptidase (439 aa).

Asp244, Asp255, His335, Glu380, and Glu419 together coordinate Mn(2+).

It belongs to the peptidase M24B family. Bacterial-type prolidase subfamily. The cofactor is Mn(2+).

It catalyses the reaction Xaa-L-Pro dipeptide + H2O = an L-alpha-amino acid + L-proline. In terms of biological role, splits dipeptides with a prolyl residue in the C-terminal position. The protein is Xaa-Pro dipeptidase of Shewanella amazonensis (strain ATCC BAA-1098 / SB2B).